The sequence spans 421 residues: Histidine--tRNA ligase (421 aa).

Belongs to the class-II aminoacyl-tRNA synthetase family. As to quaternary structure, homodimer.

The protein localises to the cytoplasm. The catalysed reaction is tRNA(His) + L-histidine + ATP = L-histidyl-tRNA(His) + AMP + diphosphate + H(+). In Francisella tularensis subsp. novicida (strain U112), this protein is Histidine--tRNA ligase.